A 221-amino-acid chain; its full sequence is Cytidylate kinase 1 (221 aa).

7–15 serves as a coordination point for ATP; the sequence is GPSASGKSS.

It belongs to the cytidylate kinase family. Type 1 subfamily.

It localises to the cytoplasm. It carries out the reaction CMP + ATP = CDP + ADP. The catalysed reaction is dCMP + ATP = dCDP + ADP. This Borrelia garinii subsp. bavariensis (strain ATCC BAA-2496 / DSM 23469 / PBi) (Borreliella bavariensis) protein is Cytidylate kinase 1.